Reading from the N-terminus, the 260-residue chain is HTH-type transcriptional repressor NanR (260 aa).

Residues 1–22 are disordered; sequence MNAFDSQAEDSPTSLGRSLRRR. One can recognise an HTH gntR-type domain in the interval 27 to 95; it reads KKLSEMVEEE…NGERARVSRP (69 aa). Positions 55–74 form a DNA-binding region, H-T-H motif; it reads ERELMAFFNVGRPSVREALA.

The protein belongs to the NanR family.

Functionally, transcriptional repressor that controls expression of the genes required for the catabolism of sialic acids. This chain is HTH-type transcriptional repressor NanR, found in Salmonella newport (strain SL254).